The following is a 636-amino-acid chain: Protein SOSEKI 2 (636 aa).

The segment at 9–103 is DIX-like oligomerization domain; it reads HKIEVIYLLS…YVLKALEVMD (95 aa). Disordered regions lie at residues 164-188, 281-304, 340-393, and 499-524; these read VHNNMTGKANRNEQGDAYGTTSRVP, HGRLSRRSSDTLRDSNSVGNTVDI, VEGS…TSAK, and LGSGQASESFSPASPHAPQRPIVSRP. 2 stretches are compositionally biased toward polar residues: residues 375–390 and 499–510; these read SSKSATQNSRPVTYET and LGSGQASESFSP.

This sequence belongs to the SOSEKI family. As to quaternary structure, homodimer. Forms long polymer filaments with other SOKs proteins polymers crucial for polar localization and biological activity.

The protein localises to the cell membrane. Functionally, SOSEKI proteins locally interpret global polarity cues and can influence cell division orientation to coordinate cell polarization relative to body axes. This is Protein SOSEKI 2 from Physcomitrium patens (Spreading-leaved earth moss).